Here is a 199-residue protein sequence, read N- to C-terminus: Recombination protein RecR (199 aa).

Residues 58-73 form a C4-type zinc finger; it reads CSACGNVDTQDPCAIC. A Toprim domain is found at 81–176; sequence HILCIVEEVG…SVSRLAHGVP (96 aa).

Belongs to the RecR family.

In terms of biological role, may play a role in DNA repair. It seems to be involved in an RecBC-independent recombinational process of DNA repair. It may act with RecF and RecO. The chain is Recombination protein RecR from Parvibaculum lavamentivorans (strain DS-1 / DSM 13023 / NCIMB 13966).